Consider the following 274-residue polypeptide: Actin-binding protein Smlt3054 (274 aa).

ANK repeat units lie at residues 192-221 (SGNT…DVAA) and 225-254 (HGWA…NPEQ). The tract at residues 251-274 (NPEQPGWRGRTPTRMHRHEQTQAL) is disordered.

Exists as a dimer as well as a higher order oligomer.

Its subcellular location is the secreted. The protein resides in the periplasm. Directly binds F-actin, which results in thickened and distorted F-actin fibers, and affects cellular F-actin localization. Thus, may be a host effector whose function is to disrupt host actin cytoskeletal structure, which may enhance invasion. The sequence is that of Actin-binding protein Smlt3054 from Stenotrophomonas maltophilia (strain K279a).